A 204-amino-acid polypeptide reads, in one-letter code: MTLTVTDLAIARGGIPVLEGLSFTLTPGRALILRGPNGAGKTTLLRTLAGLQPPLAGRIEGAEDKIAYAGHSDGLKPTLSVTENLLFWAAVFGGRDITPALEGFALGDLADRHAGNLSAGQKRRLGLARLLVTGRPIWMLDEPTVSLDRDAVAMFADTVRAHLGQGGSALIATHIDLGLDAEVLDVGPYRARPAPLDDPDGDFL.

An ABC transporter domain is found at L3–L204. G35 to T42 contributes to the ATP binding site.

The protein belongs to the ABC transporter superfamily. CcmA exporter (TC 3.A.1.107) family. As to quaternary structure, the complex is composed of two ATP-binding proteins (CcmA) and two transmembrane proteins (CcmB).

Its subcellular location is the cell membrane. It catalyses the reaction heme b(in) + ATP + H2O = heme b(out) + ADP + phosphate + H(+). Functionally, part of the ABC transporter complex CcmAB involved in the biogenesis of c-type cytochromes; once thought to export heme, this seems not to be the case, but its exact role is uncertain. Responsible for energy coupling to the transport system. The polypeptide is Cytochrome c biogenesis ATP-binding export protein CcmA (Ruegeria pomeroyi (strain ATCC 700808 / DSM 15171 / DSS-3) (Silicibacter pomeroyi)).